Consider the following 320-residue polypeptide: Mitochondrial glutamate carrier 2 (320 aa).

Solcar repeat units follow at residues 11 to 97, 105 to 215, and 224 to 313; these read LSIS…LRQL, RNLK…LNQL, and ASFT…GIGE. The next 3 membrane-spanning stretches (helical) occupy residues 17 to 37, 66 to 86, and 110 to 128; these read LING…IDLA, FLGM…EKAI, and EMLA…TCPM. Residue Ser150 is modified to Phosphoserine. 3 helical membrane-spanning segments follow: residues 190–210, 230–250, and 293–313; these read GLGA…PLFA, FVAG…LDVL, and ALVI…GIGE.

This sequence belongs to the mitochondrial carrier (TC 2.A.29) family.

It is found in the mitochondrion inner membrane. It catalyses the reaction L-glutamate(in) + H(+)(in) = L-glutamate(out) + H(+)(out). Its function is as follows. Responsible for the transport of glutamate from the cytosol into the mitochondrial matrix with the concomitant import of a proton (symport system). In Mus musculus (Mouse), this protein is Mitochondrial glutamate carrier 2 (Slc25a18).